The following is a 456-amino-acid chain: MLNNAMSVVILAAGKGTRMYSDLPKVLHTLAGKAMVQHVIDAANELGAAHVHLVYGHGGDLLKQALKDDNLNWVLQAEQLGTGHAMQQAAPFFADDEDILMLYGDVPLISVETLQRLRDAKPQGGIGLLTVKLDDPTGYGRITRENGKVTGIVEHKDATDEQRQIQEINTGILIANGADMKRWLAKLTNNNAQGEYYITDIIALAYQEGREIVAVHPQRLSEVEGVNNRLQLSRLERVYQSEQAEKLLLAGVMLRDPARFDLRGTLAHGRDIEIDTNVIIEGNVTLGHRVKIGTGCVIKNSVIGDDCEISPYTIVEDANLAAACTIGPFARLRPGAELLEGAHVGNFVEMKKARLGKGSKAGHLTYLGDAEIGDNVNIGAGTITCNYDGANKFKTIIGDDVFVGSDTQLVAPVTVGKGATIAAGTTVTRNVGENALAISRVPQTQKEGWRRPVKKK.

The tract at residues 1 to 229 is pyrophosphorylase; the sequence is MLNNAMSVVI…LSEVEGVNNR (229 aa). Residues 11 to 14, lysine 25, glutamine 76, 81 to 82, 103 to 105, glycine 140, glutamate 154, asparagine 169, and asparagine 227 each bind UDP-N-acetyl-alpha-D-glucosamine; these read LAAG, GT, and YGD. Aspartate 105 provides a ligand contact to Mg(2+). Asparagine 227 lines the Mg(2+) pocket. A linker region spans residues 230-250; it reads LQLSRLERVYQSEQAEKLLLA. The interval 251 to 456 is N-acetyltransferase; sequence GVMLRDPARF…EGWRRPVKKK (206 aa). The UDP-N-acetyl-alpha-D-glucosamine site is built by arginine 333 and lysine 351. Histidine 363 serves as the catalytic Proton acceptor. UDP-N-acetyl-alpha-D-glucosamine-binding residues include tyrosine 366 and asparagine 377. Acetyl-CoA contacts are provided by residues alanine 380, 386–387, serine 405, alanine 423, and arginine 440; that span reads NY.

The protein in the N-terminal section; belongs to the N-acetylglucosamine-1-phosphate uridyltransferase family. In the C-terminal section; belongs to the transferase hexapeptide repeat family. Homotrimer. The cofactor is Mg(2+).

The protein resides in the cytoplasm. The enzyme catalyses alpha-D-glucosamine 1-phosphate + acetyl-CoA = N-acetyl-alpha-D-glucosamine 1-phosphate + CoA + H(+). It carries out the reaction N-acetyl-alpha-D-glucosamine 1-phosphate + UTP + H(+) = UDP-N-acetyl-alpha-D-glucosamine + diphosphate. Its pathway is nucleotide-sugar biosynthesis; UDP-N-acetyl-alpha-D-glucosamine biosynthesis; N-acetyl-alpha-D-glucosamine 1-phosphate from alpha-D-glucosamine 6-phosphate (route II): step 2/2. It participates in nucleotide-sugar biosynthesis; UDP-N-acetyl-alpha-D-glucosamine biosynthesis; UDP-N-acetyl-alpha-D-glucosamine from N-acetyl-alpha-D-glucosamine 1-phosphate: step 1/1. The protein operates within bacterial outer membrane biogenesis; LPS lipid A biosynthesis. Functionally, catalyzes the last two sequential reactions in the de novo biosynthetic pathway for UDP-N-acetylglucosamine (UDP-GlcNAc). The C-terminal domain catalyzes the transfer of acetyl group from acetyl coenzyme A to glucosamine-1-phosphate (GlcN-1-P) to produce N-acetylglucosamine-1-phosphate (GlcNAc-1-P), which is converted into UDP-GlcNAc by the transfer of uridine 5-monophosphate (from uridine 5-triphosphate), a reaction catalyzed by the N-terminal domain. This is Bifunctional protein GlmU from Escherichia coli O8 (strain IAI1).